Here is a 212-residue protein sequence, read N- to C-terminus: Thymidylate kinase (212 aa).

11–18 serves as a coordination point for ATP; it reads GPEGAGKT.

This sequence belongs to the thymidylate kinase family.

It carries out the reaction dTMP + ATP = dTDP + ADP. In terms of biological role, phosphorylation of dTMP to form dTDP in both de novo and salvage pathways of dTTP synthesis. In Streptococcus pneumoniae (strain Hungary19A-6), this protein is Thymidylate kinase.